The primary structure comprises 270 residues: MPELPEVETTRRGLAPHLQGRRVHGVILRRADLRWPIPPEVAGQLPGQRIDAVRRRAKYLLLDTAAGSAVLHLGMSGSLRVLPGDTPLRAHDHVDISLDNGRLLRFNDPRRFGSLLWQPAGEVHPLLQGLGPEPLDDAFDGNYLFARSRGRSAPVKTFLMDQAVVVGVGNIYAAESLFKAGISPLREAGKISRERYQRLADAVKEILGYAITRGGTTLRDFISPDGAPGYFEQELLVYGRDGLPCPNCGRALKHATIGQRASVWCSHCQR.

The active-site Schiff-base intermediate with DNA is the Pro-2. The active-site Proton donor is the Glu-3. Residue Lys-58 is the Proton donor; for beta-elimination activity of the active site. His-91, Arg-110, and Arg-151 together coordinate DNA. An FPG-type zinc finger spans residues 236–270 (LVYGRDGLPCPNCGRALKHATIGQRASVWCSHCQR). The Proton donor; for delta-elimination activity role is filled by Arg-260.

Belongs to the FPG family. As to quaternary structure, monomer. Zn(2+) is required as a cofactor.

The catalysed reaction is Hydrolysis of DNA containing ring-opened 7-methylguanine residues, releasing 2,6-diamino-4-hydroxy-5-(N-methyl)formamidopyrimidine.. It catalyses the reaction 2'-deoxyribonucleotide-(2'-deoxyribose 5'-phosphate)-2'-deoxyribonucleotide-DNA = a 3'-end 2'-deoxyribonucleotide-(2,3-dehydro-2,3-deoxyribose 5'-phosphate)-DNA + a 5'-end 5'-phospho-2'-deoxyribonucleoside-DNA + H(+). Involved in base excision repair of DNA damaged by oxidation or by mutagenic agents. Acts as a DNA glycosylase that recognizes and removes damaged bases. Has a preference for oxidized purines, such as 7,8-dihydro-8-oxoguanine (8-oxoG). Has AP (apurinic/apyrimidinic) lyase activity and introduces nicks in the DNA strand. Cleaves the DNA backbone by beta-delta elimination to generate a single-strand break at the site of the removed base with both 3'- and 5'-phosphates. The sequence is that of Formamidopyrimidine-DNA glycosylase from Stenotrophomonas maltophilia (strain R551-3).